The primary structure comprises 210 residues: SAP domain-containing ribonucleoprotein (210 aa).

Alanine 2 bears the N-acetylalanine mark. The 35-residue stretch at leucine 8 to leucine 42 folds into the SAP domain. Lysine 10 is modified (N6-acetyllysine). The span at histidine 45–glutamate 64 shows a compositional bias: acidic residues. Residues histidine 45–glutamate 87 are disordered. The span at proline 65–glutamate 87 shows a compositional bias: basic and acidic residues. Lysine 142 bears the N6-acetyllysine mark. The interval valine 161 to alanine 210 is disordered. Serine 163 bears the Phosphoserine mark. Positions valine 184–threonine 193 are enriched in polar residues.

It belongs to the SAP domain-containing ribonucleoprotein family. In terms of assembly, interacts with DDX39A. Interacts with FUS. Interacts (via the C-terminal domain) with DDX39B; the interaction is direct and facilitates RNA binding of DDX39B. Component of the transcription/export (TREX) complex at least composed of ALYREF/THOC4, DDX39B, SARNP/CIP29, CHTOP and the THO subcomplex; TREX seems to have dynamic structure involving ATP-dependent remodeling; in the complex interacts directly with DDX39B in a ATP-dependent manner which bridges it to ALYREF/THOC4.

The protein localises to the nucleus. The protein resides in the nucleus speckle. Binds both single-stranded and double-stranded DNA with higher affinity for the single-stranded form. Specifically binds to scaffold/matrix attachment region DNA. Also binds single-stranded RNA. Enhances RNA unwinding activity of DDX39A. May participate in important transcriptional or translational control of cell growth, metabolism and carcinogenesis. Component of the TREX complex which is thought to couple mRNA transcription, processing and nuclear export, and specifically associates with spliced mRNA and not with unspliced pre-mRNA. The TREX complex is recruited to spliced mRNAs by a transcription-independent mechanism, binds to mRNA upstream of the exon-junction complex (EJC) and is recruited in a splicing- and cap-dependent manner to a region near the 5' end of the mRNA where it functions in mRNA export to the cytoplasm via the TAP/NXF1 pathway. Associates with DDX39B, which facilitates RNA binding of DDX39B and likely plays a role in mRNA export. This Rattus norvegicus (Rat) protein is SAP domain-containing ribonucleoprotein (Sarnp).